The chain runs to 710 residues: Interferon-induced GTP-binding protein Mx2 (710 aa).

The disordered stretch occupies residues 1–87; it reads MSLSFRPLKY…RSKGPENNLY (87 aa). 2 stretches are compositionally biased toward polar residues: residues 39 to 50 and 58 to 79; these read QTMSPPQWQVEE and NNFSQLNLDPQQPEANGGQQRS. The 272-residue stretch at 112–383 folds into the Dynamin-type G domain; sequence DLALPAIAVI…LIWHINKSLP (272 aa). Residues 122-129 are G1 motif; the sequence is GDQSSGKS. 122–129 lines the GTP pocket; that stretch reads GDQSSGKS. Residues 147-149 are G2 motif; the sequence is ITR. The interval 221-224 is G3 motif; the sequence is DLPG. GTP-binding positions include 221–225 and 290–293; these read DLPGI and TKPD. Residues 290-293 are G4 motif; the sequence is TKPD. Residues 322-325 are G5 motif; it reads KCRG. The GED domain occupies 619–710; that stretch reads IVEIGVHLNA…ALYEFPHFKG (92 aa).

It belongs to the TRAFAC class dynamin-like GTPase superfamily. Dynamin/Fzo/YdjA family.

The protein resides in the cytoplasm. It is found in the nucleus. In terms of biological role, interferon-induced dynamin-like GTPase with antiviral activity against vesicular stomatitis virus (VSV). This Bubalus bubalis (Domestic water buffalo) protein is Interferon-induced GTP-binding protein Mx2 (MX2).